Consider the following 646-residue polypeptide: Type I inositol polyphosphate 5-phosphatase 2 (646 aa).

Basic and acidic residues predominate over residues 59-74; sequence TDEDSHNGRRGSEADH. Disordered regions lie at residues 59 to 99, 185 to 207, and 329 to 369; these read TDED…GKSE, ESVY…SAPS, and IDNR…IRNS. The segment covering 188–207 has biased composition (polar residues); it reads YDQSPSCNNNALHRSHSAPS. Residues 341 to 350 show a composition bias toward basic and acidic residues; that stretch reads EAAKIMHDDS. 2 catalytic regions span residues 495 to 510 and 575 to 590; these read DQVF…LNMS and KKRA…WLGK.

Belongs to the inositol polyphosphate 5-phosphatase family. As to expression, expressed ubiquitously.

It carries out the reaction 1D-myo-inositol 1,4,5-trisphosphate + H2O = 1D-myo-inositol 1,4-bisphosphate + phosphate. The enzyme catalyses 1D-myo-inositol 1,3,4,5-tetrakisphosphate + H2O = 1D-myo-inositol 1,3,4-trisphosphate + phosphate. Has phosphatase activity toward Ins(1,4,5)P3 and Ins(1,3,4,5)P4. Seems to be involved in the abscisic acid (ABA) signaling pathway. Could also be able to hydrolyze PtdIns(4,5)P2 and PtdIns(3,4,5)P3. The polypeptide is Type I inositol polyphosphate 5-phosphatase 2 (Arabidopsis thaliana (Mouse-ear cress)).